A 157-amino-acid chain; its full sequence is Endoribonuclease YbeY (157 aa).

Histidine 116, histidine 120, and histidine 126 together coordinate Zn(2+).

The protein belongs to the endoribonuclease YbeY family. The cofactor is Zn(2+).

It localises to the cytoplasm. Functionally, single strand-specific metallo-endoribonuclease involved in late-stage 70S ribosome quality control and in maturation of the 3' terminus of the 16S rRNA. In Renibacterium salmoninarum (strain ATCC 33209 / DSM 20767 / JCM 11484 / NBRC 15589 / NCIMB 2235), this protein is Endoribonuclease YbeY.